We begin with the raw amino-acid sequence, 338 residues long: MTVKTRASIAKKIEKDGLDSQYLFMDPNEVLQVQEESKKIPYKMEIVWRNVALFAALHVAAAIGLYELVFHAKWQTAVFSFALYVFSGFGITAGAHRLWSHKSYKATTPMRIFLMLLNNIALQNDIIEWARDHRCHHKWTDTDADPHNTTRGFFFTHMGWLLVRKHPQVKEHGGKLDLSDLFSDPVLVFQRKHYFPLVILFCFILPTIIPVYFWKETAFIAFYVAGTFRYCFTLHATWCINSAAHYFGWKPYDTSVSAVENVFTTVVAVGEGGHNFHHTFPQDYRASEYSLIYNWTRVLIDTAAVLGLVYDRKTIADEFISRQVANHGSEESRKKSIM.

The next 4 helical transmembrane spans lie at 51-71, 76-96, 194-214, and 218-238; these read VALF…LVFH, TAVF…AGAH, YFPL…VYFW, and AFIA…HATW.

This sequence belongs to the fatty acid desaturase type 1 family. In terms of tissue distribution, expressed in the intestine in adult worms and in all four larval stages.

The protein resides in the membrane. It carries out the reaction octadecanoyl-CoA + 2 Fe(II)-[cytochrome b5] + O2 + 2 H(+) = (9Z)-octadecenoyl-CoA + 2 Fe(III)-[cytochrome b5] + 2 H2O. The enzyme catalyses hexadecanoyl-CoA + 2 Fe(II)-[cytochrome b5] + O2 + 2 H(+) = (9Z)-hexadecenoyl-CoA + 2 Fe(III)-[cytochrome b5] + 2 H2O. It catalyses the reaction heptadecanoyl-CoA + 2 Fe(II)-[cytochrome b5] + O2 + 2 H(+) = (9Z)-heptadecenoyl-CoA + 2 Fe(III)-[cytochrome b5] + 2 H2O. The catalysed reaction is (11E)-octadecenoyl-CoA + 2 Fe(II)-[cytochrome b5] + O2 + 2 H(+) = (9Z,11E)-octadecadienoyl-CoA + 2 Fe(III)-[cytochrome b5] + 2 H2O. Its pathway is lipid metabolism; monounsaturated fatty acid biosynthesis. It functions in the pathway lipid metabolism; fatty acid metabolism. Delta(9)-fatty acid desaturase that acts preferentially on stearoyl-CoA (octadecanoyl-CoA) producing the monounsaturated oleoyl-CoA ((9Z)-octadecenoyl-CoA), one of the most abundant monounsaturated fatty acid in Caenorhabditis elegans phospholipids and triacylglycerols. Also acts on palmitoyl-CoA (hexadecanoyl-CoA), heptadecanoyl-CoA and (11E)-octadecenoyl-CoA (trans-vaccenoyl-CoA), the monounsaturated fatty acids (MUFAs) produced are further used by several other desaturases and elongases as substrates to synthesize polyunsaturated fatty acids (PUFAs) endogenously (PUFAs are essential for membrane structure and many cellular and physiological processes). Unlike plants, Caenorhabditis elegans desaturases seem to use fatty acyl-CoAs as substrates. Partially inhibits expression of genes involved in beta-oxidation, such as ech-1 and acs-2, perhaps signaling via the actions of one of its fatty acid products. May form part of a negative feedback loop with the transcription factor nhr-49 to limit beta-oxidation, in which nhr-49 stimulates expression of fat-7 and acs-2, and in turn fat-7 indirectly inhibits acs-2 and other genes also involved in beta-oxidation. This chain is Delta(9)-fatty-acid desaturase fat-7 (fat-7), found in Caenorhabditis elegans.